A 164-amino-acid polypeptide reads, in one-letter code: uncharacterized protein (164 aa).

The interval 1 to 77 (MGQKKTMGTE…PCSIRDAPFH (77 aa)) is disordered.

This is an uncharacterized protein from Homo sapiens (Human).